Here is a 146-residue protein sequence, read N- to C-terminus: Large ribosomal subunit protein uL15 (146 aa).

The segment at 1-65 is disordered; that stretch reads MSDIQLNSLK…GQMPLQRRLP (65 aa). Over residues 24–34 the composition is skewed to gly residues; sequence RGIGSGLGKTA.

Belongs to the universal ribosomal protein uL15 family. As to quaternary structure, part of the 50S ribosomal subunit.

Functionally, binds to the 23S rRNA. The polypeptide is Large ribosomal subunit protein uL15 (Bordetella avium (strain 197N)).